A 752-amino-acid chain; its full sequence is Photosystem I P700 chlorophyll a apoprotein A1 (752 aa).

A run of 8 helical transmembrane segments spans residues Ile73 to Ala96, Leu159 to His182, Met198 to Leu222, Ile294 to Tyr312, Trp349 to Tyr372, Leu388 to Val414, Ala436 to His458, and Phe533 to Leu551. [4Fe-4S] cluster contacts are provided by Cys575 and Cys584. Helical transmembrane passes span His591–Trp612 and Ser666–Phe688. His677 contacts chlorophyll a'. Chlorophyll a is bound by residues Met685 and Tyr693. Trp694 is a phylloquinone binding site. Residues Ala726–Ala746 traverse the membrane as a helical segment.

This sequence belongs to the PsaA/PsaB family. As to quaternary structure, the PsaA/B heterodimer binds the P700 chlorophyll special pair and subsequent electron acceptors. PSI consists of a core antenna complex that captures photons, and an electron transfer chain that converts photonic excitation into a charge separation. The eukaryotic PSI reaction center is composed of at least 11 subunits. P700 is a chlorophyll a/chlorophyll a' dimer, A0 is one or more chlorophyll a, A1 is one or both phylloquinones and FX is a shared 4Fe-4S iron-sulfur center. is required as a cofactor.

Its subcellular location is the plastid. The protein resides in the chloroplast thylakoid membrane. It carries out the reaction reduced [plastocyanin] + hnu + oxidized [2Fe-2S]-[ferredoxin] = oxidized [plastocyanin] + reduced [2Fe-2S]-[ferredoxin]. PsaA and PsaB bind P700, the primary electron donor of photosystem I (PSI), as well as the electron acceptors A0, A1 and FX. PSI is a plastocyanin/cytochrome c6-ferredoxin oxidoreductase, converting photonic excitation into a charge separation, which transfers an electron from the donor P700 chlorophyll pair to the spectroscopically characterized acceptors A0, A1, FX, FA and FB in turn. Oxidized P700 is reduced on the lumenal side of the thylakoid membrane by plastocyanin or cytochrome c6. The protein is Photosystem I P700 chlorophyll a apoprotein A1 of Thalassiosira pseudonana (Marine diatom).